A 124-amino-acid chain; its full sequence is MATINQLVRKPRAKQVVKSNVPALAACPQKRGVCTRVYTTTPKKPNSALRKVCRVRLTNGFEVTSYIGGEGHNLQEHSVVLIRGGRVKDLPGVRYHTVRGALDCAGVNDRKQARSKYGVKRPKS.

The residue at position 89 (Asp-89) is a 3-methylthioaspartic acid.

It belongs to the universal ribosomal protein uS12 family. In terms of assembly, part of the 30S ribosomal subunit. Contacts proteins S8 and S17. May interact with IF1 in the 30S initiation complex.

Functionally, with S4 and S5 plays an important role in translational accuracy. Its function is as follows. Interacts with and stabilizes bases of the 16S rRNA that are involved in tRNA selection in the A site and with the mRNA backbone. Located at the interface of the 30S and 50S subunits, it traverses the body of the 30S subunit contacting proteins on the other side and probably holding the rRNA structure together. The combined cluster of proteins S8, S12 and S17 appears to hold together the shoulder and platform of the 30S subunit. This chain is Small ribosomal subunit protein uS12, found in Vibrio cholerae serotype O1 (strain ATCC 39315 / El Tor Inaba N16961).